A 373-amino-acid polypeptide reads, in one-letter code: Sterol-4-alpha-carboxylate 3-dehydrogenase, decarboxylating (373 aa).

Position 1 is an N-acetylmethionine (Met-1). Thr-22 carries the phosphothreonine modification. Residue Tyr-172 is the Proton acceptor of the active site. Residue Lys-176 coordinates NAD(+). Residues 298 to 318 (WVAYYLALLLSLLVMVISPVI) traverse the membrane as a helical segment. The Prevents secretion from ER signature appears at 370 to 373 (RRVK).

Belongs to the 3-beta-HSD family. In terms of assembly, homodimer. Brain, heart, liver, lung, kidney, skin and placenta.

It localises to the endoplasmic reticulum membrane. The protein localises to the lipid droplet. The catalysed reaction is a 3beta-hydroxysteroid-4alpha-carboxylate + NADP(+) = a 3-oxosteroid + CO2 + NADPH. The enzyme catalyses a 3beta-hydroxysteroid-4alpha-carboxylate + NAD(+) = a 3-oxosteroid + CO2 + NADH. It catalyses the reaction 4alpha-carboxyzymosterol + NADP(+) = zymosterone + CO2 + NADPH. It carries out the reaction 4alpha-carboxy-4beta-methyl-5alpha-cholest-8-en-3beta-ol + NADP(+) = 4alpha-methyl-5alpha-cholest-8-en-3-one + CO2 + NADPH. The catalysed reaction is 4alpha-carboxy-5alpha-cholest-8-ene-3beta-ol + NADP(+) = 5alpha-cholest-8-en-3-one + CO2 + NADPH. The enzyme catalyses 4beta-methylzymosterol-4alpha-carboxylate + NADP(+) = 3-dehydro-4-methylzymosterol + CO2 + NADPH. It catalyses the reaction 4beta-methylzymosterol-4alpha-carboxylate + NAD(+) = 3-dehydro-4-methylzymosterol + CO2 + NADH. It carries out the reaction 4alpha-carboxy-5alpha-cholest-8-ene-3beta-ol + NAD(+) = 5alpha-cholest-8-en-3-one + CO2 + NADH. The catalysed reaction is 4alpha-carboxy-4beta-methyl-5alpha-cholest-8-en-3beta-ol + NAD(+) = 4alpha-methyl-5alpha-cholest-8-en-3-one + CO2 + NADH. The enzyme catalyses 4alpha-carboxyzymosterol + NAD(+) = zymosterone + CO2 + NADH. The protein operates within steroid biosynthesis; zymosterol biosynthesis; zymosterol from lanosterol: step 4/6. Catalyzes the NAD(P)(+)-dependent oxidative decarboxylation of the C4 methyl groups of 4-alpha-carboxysterols in post-squalene cholesterol biosynthesis. Also plays a role in the regulation of the endocytic trafficking of EGFR. This Homo sapiens (Human) protein is Sterol-4-alpha-carboxylate 3-dehydrogenase, decarboxylating (NSDHL).